The chain runs to 35 residues: MDTRLLVVLLPVATAAAWALFNIGRLALQQLKRMS.

Topologically, residues 1 to 4 are lumenal; it reads MDTR. Residues 5–23 form a helical membrane-spanning segment; it reads LLVVLLPVATAAAWALFNI. Residues 24 to 35 lie on the Stromal side of the membrane; the sequence is GRLALQQLKRMS.

The protein belongs to the PsbY family. PSII is composed of 1 copy each of membrane proteins PsbA, PsbB, PsbC, PsbD, PsbE, PsbF, PsbH, PsbI, PsbJ, PsbK, PsbL, PsbM, PsbT, PsbX, PsbY, PsbZ, Psb30/Ycf12, at least 3 peripheral proteins of the oxygen-evolving complex and a large number of cofactors. It forms dimeric complexes.

The protein localises to the plastid. Its subcellular location is the chloroplast thylakoid membrane. Its function is as follows. Loosely associated component of the core of photosystem II (PSII), it is not always seen in crystals. PSII is a light-driven water plastoquinone oxidoreductase, using light energy to abstract electrons from H(2)O, generating a proton gradient subsequently used for ATP formation. The sequence is that of Photosystem II reaction center protein Y from Emiliania huxleyi (Coccolithophore).